The sequence spans 619 residues: MPIQVLPPQLANQIAAGEVVERPASVVKELVENSLDAGATRIDIDIERGGAKLIRIRDNGSGIKKDELALALARHATSKIASLDDLEAIISLGFRGEALASISSVARLTLTSRTAEQQEAWQAYAEGRDQAVTVKPAAHPVGTTLEVLDLFYNTPARRKFMRTEKTEFGHIDEVVRRIALARFDVTINLNHNGKVIRQYRAVAQDGQRERRLGTICGAAFLEHALAIEWQHGDLTLRGWVADPLHTTPALAEIQYCYVNGRMMRDRLINHAIRQACEDKLGADQQPAFVLYLEIDPHQVDVNVHPAKHEVRFHQSRLVHDFIYQGVLSVLQQQLDAPLAEKDDPPTPRQMPENRIAAGGNQFARPSEAREAATRFSITSSREPAASGGSSGGASWPHAQPGYQKQQGALYRQLLDTPAAPRPAQPSAAPAELAGHSQSFGRVLTIVGGDCALLEREGSLALLSLTVAERWLRQAQLTPGTEAVCAQPLLIPLRLKVTEGEKRALAAAQSALTQLGIELHTDALHVTVRAVPLPLRQQNLQILIPELIGYLAQQNAFDVGNIAQWMARNLTSEQASWNMAQAIALLADVERLCPQLVKTPPGGLLQPVDLHSAMNALKDE.

The interval 358 to 401 (GGNQFARPSEAREAATRFSITSSREPAASGGSSGGASWPHAQPG) is disordered.

It belongs to the DNA mismatch repair MutL/HexB family.

This protein is involved in the repair of mismatches in DNA. It is required for dam-dependent methyl-directed DNA mismatch repair. May act as a 'molecular matchmaker', a protein that promotes the formation of a stable complex between two or more DNA-binding proteins in an ATP-dependent manner without itself being part of a final effector complex. This chain is DNA mismatch repair protein MutL, found in Klebsiella pneumoniae (strain 342).